A 70-amino-acid chain; its full sequence is uncharacterized protein (70 aa).

Residues 12–32 (VLFMNFFSVFVCTIGTLFLVF) traverse the membrane as a helical segment.

The protein resides in the membrane. This is an uncharacterized protein from Saccharomyces cerevisiae (strain ATCC 204508 / S288c) (Baker's yeast).